Reading from the N-terminus, the 199-residue chain is Prolactin-2 (199 aa).

Intrachain disulfides connect Cys4-Cys11, Cys58-Cys174, and Cys191-Cys199.

The protein belongs to the somatotropin/prolactin family.

It is found in the secreted. The polypeptide is Prolactin-2 (Alligator mississippiensis (American alligator)).